The sequence spans 440 residues: Chromosomal replication initiator protein DnaA (440 aa).

The tract at residues 1–74 (MNPSQILENL…VQSGNKAIIN (74 aa)) is domain I, interacts with DnaA modulators. Residues 74–99 (NIQAQSTKQSNKSTKIDIAHIQAQST) are domain II. The tract at residues 100–316 (ILNPSFTFES…GIIISLNAYA (217 aa)) is domain III, AAA+ region. ATP-binding residues include Gly-146, Gly-148, Lys-149, and Thr-150. The tract at residues 317–440 (TILGQEITLE…KNKILIKSQS (124 aa)) is domain IV, binds dsDNA.

It belongs to the DnaA family. In terms of assembly, oligomerizes as a right-handed, spiral filament on DNA at oriC.

It is found in the cytoplasm. Its function is as follows. Plays an essential role in the initiation and regulation of chromosomal replication. ATP-DnaA binds to the origin of replication (oriC) to initiate formation of the DNA replication initiation complex once per cell cycle. Binds the DnaA box (a 9 base pair repeat at the origin) and separates the double-stranded (ds)DNA. Forms a right-handed helical filament on oriC DNA; dsDNA binds to the exterior of the filament while single-stranded (ss)DNA is stabiized in the filament's interior. The ATP-DnaA-oriC complex binds and stabilizes one strand of the AT-rich DNA unwinding element (DUE), permitting loading of DNA polymerase. After initiation quickly degrades to an ADP-DnaA complex that is not apt for DNA replication. Binds acidic phospholipids. This is Chromosomal replication initiator protein DnaA from Campylobacter jejuni subsp. doylei (strain ATCC BAA-1458 / RM4099 / 269.97).